A 130-amino-acid polypeptide reads, in one-letter code: Small ribosomal subunit protein uS11c (130 aa).

It belongs to the universal ribosomal protein uS11 family. In terms of assembly, part of the 30S ribosomal subunit.

It localises to the plastid. The protein resides in the chloroplast. The protein is Small ribosomal subunit protein uS11c of Adiantum capillus-veneris (Maidenhair fern).